Consider the following 357-residue polypeptide: Anthranilate phosphoribosyltransferase (357 aa).

5-phospho-alpha-D-ribose 1-diphosphate-binding positions include Gly91, 94–95 (GD), Thr99, 101–104 (NIST), 119–127 (KHGNRSVSS), and Ser131. Gly91 serves as a coordination point for anthranilate. Ser103 provides a ligand contact to Mg(2+). Asn122 is a binding site for anthranilate. Residue Arg177 participates in anthranilate binding. Residues Asp235 and Glu236 each contribute to the Mg(2+) site.

Belongs to the anthranilate phosphoribosyltransferase family. As to quaternary structure, homodimer. Mg(2+) is required as a cofactor.

The enzyme catalyses N-(5-phospho-beta-D-ribosyl)anthranilate + diphosphate = 5-phospho-alpha-D-ribose 1-diphosphate + anthranilate. It participates in amino-acid biosynthesis; L-tryptophan biosynthesis; L-tryptophan from chorismate: step 2/5. In terms of biological role, catalyzes the transfer of the phosphoribosyl group of 5-phosphorylribose-1-pyrophosphate (PRPP) to anthranilate to yield N-(5'-phosphoribosyl)-anthranilate (PRA). This is Anthranilate phosphoribosyltransferase from Shewanella baltica (strain OS195).